The following is a 745-amino-acid chain: Junction plakoglobin (745 aa).

M1 is subject to N-acetylmethionine. Residue T14 is glycosylated (O-linked (GlcNAc) threonine). Phosphoserine occurs at positions 99 and 125. ARM repeat units follow at residues 132–171 (NYQDDAELATRALPELTKLLNDEDPVVVTKAAMIVNQLSK), 172–215 (KEAS…LSHH), 216–255 (REGLLAIFKSGGIPALVRMLSSPVESVLFYAITTLHNLLL), 258–297 (EGAKMAVRLADGLQKMVPLLNKNNPKFLAITTDCLQLLAY), 298–341 (GNQE…LSVC), 342–381 (PSNKPAIVEAGGMQALGKHLTSNSPRLVQNCLWTLRNLSD), 383–420 (ATKQEGLESVLKILVNQLSVDDVNVLTCATGTLSNLTC), 423–464 (SKNK…HLTS), 470–510 (EMAQ…NLAL), 512–551 (PANHAPLQEAAVIPRLVQLLVKAHQDAQRHVAAGTQQPYT), 574–613 (PMNRMEIFRLNTIPLFVQLLYSSVENIQRVAAGVLCELAQ), and 615–661 (KEAA…PDYR). Residues 132-297 (NYQDDAELAT…TTDCLQLLAY (166 aa)) form an interaction with DSC1 and DSG1 region. S182 carries the phosphoserine modification. Residues 574 to 661 (PMNRMEIFRL…ISEDKNPDYR (88 aa)) form an interaction with DSC1 region. 2 positions are modified to phosphoserine: S665 and S730.

Belongs to the beta-catenin family. As to quaternary structure, homodimer. Component of an E-cadherin/catenin adhesion complex composed of at least E-cadherin/CDH1 and gamma-catenin/JUP, and possibly alpha-catenin/CTNNA1; the complex is located to adherens junctions. The stable association of CTNNA1 is controversial as CTNNA1 was shown not to bind to F-actin when assembled in the complex. Interacts with MUC1. Interacts with CAV1. Interacts with PTPRJ. Interacts with DSG1. Interacts with DSC1 and DSC2. Interacts with PKP2. Interacts with PKP3 (via N-terminus); the interaction is required for PKP3 localization to desmosome cell-cell junctions. Interacts with DSG4. Post-translationally, may be phosphorylated by FER. As to expression, expressed in the heart (at protein level).

It is found in the cell junction. It localises to the adherens junction. Its subcellular location is the desmosome. The protein resides in the cytoplasm. The protein localises to the cytoskeleton. It is found in the cell membrane. It localises to the nucleus. Common junctional plaque protein. The membrane-associated plaques are architectural elements in an important strategic position to influence the arrangement and function of both the cytoskeleton and the cells within the tissue. The presence of plakoglobin in both the desmosomes and in the intermediate junctions suggests that it plays a central role in the structure and function of submembranous plaques. Acts as a substrate for VE-PTP and is required by it to stimulate VE-cadherin function in endothelial cells. Can replace beta-catenin in E-cadherin/catenin adhesion complexes which are proposed to couple cadherins to the actin cytoskeleton. The chain is Junction plakoglobin from Homo sapiens (Human).